The sequence spans 290 residues: Nucleotide-binding protein XfasM23_0667 (290 aa).

13-20 (GLSGSGKS) lines the ATP pocket. Residue 65–68 (DIRS) participates in GTP binding.

The protein belongs to the RapZ-like family.

In terms of biological role, displays ATPase and GTPase activities. The protein is Nucleotide-binding protein XfasM23_0667 of Xylella fastidiosa (strain M23).